Consider the following 266-residue polypeptide: Apolipoprotein A-I (266 aa).

The signal sequence occupies residues 1-18 (MKAALLTLAVLFLTGSQA). Tandem repeats lie at residues 67–88 (LKLL…EQIG) and 89–110 (PVTQ…QEMS). Residues 67 to 266 (LKLLDNWDSL…DEATKKLNAQ (200 aa)) are 10 X approximate tandem repeats. Position 109 is a methionine sulfoxide (M109). The stretch at 111 to 121 (KDLEEVKQKVQ) is one 3; half-length repeat. 5 repeat units span residues 122 to 143 (PYLD…QKVA), 144 to 165 (PLGS…EKLS), 166 to 187 (PLAE…AQLA), 188 to 209 (PYSD…EGGG), and 210 to 231 (ASLA…EKAR). The stretch at 232 to 242 (PALEDLRQGLL) is one 9; half-length repeat. Residues 243 to 266 (PVLESFKVSLLAAIDEATKKLNAQ) form repeat 10.

The protein belongs to the apolipoprotein A1/A4/E family. Homodimer. Interacts with APOA1BP and CLU. Component of a sperm activating protein complex (SPAP), consisting of APOA1, an immunoglobulin heavy chain, an immunoglobulin light chain and albumin. Interacts with NDRG1. Interacts with SCGB3A2. Interacts with NAXE and YJEFN3. Post-translationally, palmitoylated. Glycosylated. In terms of processing, phosphorylation sites are present in the extracellular medium. As to expression, major protein of plasma HDL, also found in chylomicrons. Synthesized in the liver and small intestine.

The protein localises to the secreted. Its function is as follows. Participates in the reverse transport of cholesterol from tissues to the liver for excretion by promoting cholesterol efflux from tissues and by acting as a cofactor for the lecithin cholesterol acyltransferase (LCAT). As part of the SPAP complex, activates spermatozoa motility. The polypeptide is Apolipoprotein A-I (APOA1) (Canis lupus familiaris (Dog)).